Reading from the N-terminus, the 193-residue chain is dTTP/UTP pyrophosphatase (193 aa).

Catalysis depends on D77, which acts as the Proton acceptor.

It belongs to the Maf family. YhdE subfamily. The cofactor is a divalent metal cation.

The protein resides in the cytoplasm. The catalysed reaction is dTTP + H2O = dTMP + diphosphate + H(+). The enzyme catalyses UTP + H2O = UMP + diphosphate + H(+). Nucleoside triphosphate pyrophosphatase that hydrolyzes dTTP and UTP. May have a dual role in cell division arrest and in preventing the incorporation of modified nucleotides into cellular nucleic acids. The chain is dTTP/UTP pyrophosphatase from Parabacteroides distasonis (strain ATCC 8503 / DSM 20701 / CIP 104284 / JCM 5825 / NCTC 11152).